Here is a 308-residue protein sequence, read N- to C-terminus: Aspartate carbamoyltransferase catalytic subunit (308 aa).

2 residues coordinate carbamoyl phosphate: arginine 51 and threonine 52. Lysine 79 is an L-aspartate binding site. Carbamoyl phosphate is bound by residues arginine 101, histidine 130, and glutamine 133. L-aspartate-binding residues include arginine 163 and arginine 215. Positions 258 and 259 each coordinate carbamoyl phosphate.

Belongs to the aspartate/ornithine carbamoyltransferase superfamily. ATCase family. Heterododecamer (2C3:3R2) of six catalytic PyrB chains organized as two trimers (C3), and six regulatory PyrI chains organized as three dimers (R2).

The enzyme catalyses carbamoyl phosphate + L-aspartate = N-carbamoyl-L-aspartate + phosphate + H(+). The protein operates within pyrimidine metabolism; UMP biosynthesis via de novo pathway; (S)-dihydroorotate from bicarbonate: step 2/3. In terms of biological role, catalyzes the condensation of carbamoyl phosphate and aspartate to form carbamoyl aspartate and inorganic phosphate, the committed step in the de novo pyrimidine nucleotide biosynthesis pathway. The sequence is that of Aspartate carbamoyltransferase catalytic subunit from Pediococcus pentosaceus (strain ATCC 25745 / CCUG 21536 / LMG 10740 / 183-1w).